Consider the following 231-residue polypeptide: tRNA (guanine-N(1)-)-methyltransferase (231 aa).

Residues glycine 111 and 131 to 136 contribute to the S-adenosyl-L-methionine site; that span reads LGNYVL.

This sequence belongs to the RNA methyltransferase TrmD family. Homodimer.

It localises to the cytoplasm. It catalyses the reaction guanosine(37) in tRNA + S-adenosyl-L-methionine = N(1)-methylguanosine(37) in tRNA + S-adenosyl-L-homocysteine + H(+). In terms of biological role, specifically methylates guanosine-37 in various tRNAs. The protein is tRNA (guanine-N(1)-)-methyltransferase of Leptospira interrogans serogroup Icterohaemorrhagiae serovar copenhageni (strain Fiocruz L1-130).